A 364-amino-acid chain; its full sequence is Protein L-Myc (364 aa).

Disordered regions lie at residues 41–81 (TSPP…HSKG), 111–172 (DRLA…EIDV), and 219–285 (PPES…KRKN). The segment covering 228-245 (ASERGPQEEVLERDAAGE) has biased composition (basic and acidic residues). The bHLH domain maps to 281–333 (TKRKNHNFLERKRRNDLRSRFLALRDQVPTLASCSKAPKVVILSKALEYLQAL). The segment at 333–361 (LVGAEKRMATEKRQLRCRQQQLQKRIAYL) is leucine-zipper.

As to quaternary structure, efficient DNA binding requires dimerization with another bHLH protein. Binds DNA as a heterodimer with MAX.

The protein localises to the nucleus. This Homo sapiens (Human) protein is Protein L-Myc (MYCL).